Reading from the N-terminus, the 278-residue chain is BPI fold-containing family A member 1 (278 aa).

Positions M1 to A19 are cleaved as a signal peptide. 4 Repeat repeats span residues G23–L28, Q30–L36, G39–L44, and G47–L52. The interval G23–L52 is 4 X 6 AA repeats of G-[LPQ]-[PL]-L-P-L. The tract at residues L112–L117 is important for surfactant activity and antibacterial properties. N182 and N228 each carry an N-linked (GlcNAc...) asparagine glycan. A disulfide bridge links C204 with C246.

The protein belongs to the BPI/LBP/Plunc superfamily. Plunc family. In terms of assembly, monomer. Interacts (via N-terminus) with SCNN1B, a subunit of the heterotrimeric epithelial sodium channel (ENaC); this inhibits proteolytic activation of ENaC. As to expression, detected in airway epithelia (trachea and lung) and in bronchoalveolar fluid (at protein level). Upper airways, nasopharyngeal epithelium and thymus. Highest expression in the trachea and progressive decrease from proximal (bronchial) to distal (bronchiolar) airways. No expression is detected in the terminal bronchioles, respiratory bronchioles or lung alveoli.

Its subcellular location is the secreted. Lipid-binding protein which shows high specificity for the surfactant phospholipid dipalmitoylphosphatidylcholine (DPPC). Plays a role in the innate immune responses of the upper airways. Reduces the surface tension in secretions from airway epithelia and inhibits the formation of biofilm by pathogenic Gram-negative bacteria, such as P.aeruginosa and K.pneumoniae. Negatively regulates proteolytic cleavage of SCNN1G, an event that is required for activation of the epithelial sodium channel (ENaC), and thereby contributes to airway surface liquid homeostasis and proper clearance of mucus. Plays a role in the airway inflammatory response after exposure to irritants. May attract macrophages and neutrophils. The protein is BPI fold-containing family A member 1 (Bpifa1) of Mus musculus (Mouse).